A 218-amino-acid chain; its full sequence is GTP cyclohydrolase 1 (218 aa).

Residues Cys109, His112, and Cys180 each contribute to the Zn(2+) site.

This sequence belongs to the GTP cyclohydrolase I family. In terms of assembly, toroid-shaped homodecamer, composed of two pentamers of five dimers.

The enzyme catalyses GTP + H2O = 7,8-dihydroneopterin 3'-triphosphate + formate + H(+). It participates in cofactor biosynthesis; 7,8-dihydroneopterin triphosphate biosynthesis; 7,8-dihydroneopterin triphosphate from GTP: step 1/1. This Mannheimia succiniciproducens (strain KCTC 0769BP / MBEL55E) protein is GTP cyclohydrolase 1.